A 234-amino-acid chain; its full sequence is Sugar fermentation stimulation protein homolog (234 aa).

The protein belongs to the SfsA family.

The sequence is that of Sugar fermentation stimulation protein homolog from Bartonella quintana (strain Toulouse) (Rochalimaea quintana).